The chain runs to 258 residues: Ribosomal RNA small subunit methyltransferase J (258 aa).

S-adenosyl-L-methionine-binding positions include 107–108, 123–124, and aspartate 177; these read RD and ER.

It belongs to the methyltransferase superfamily. RsmJ family.

Its subcellular location is the cytoplasm. The enzyme catalyses guanosine(1516) in 16S rRNA + S-adenosyl-L-methionine = N(2)-methylguanosine(1516) in 16S rRNA + S-adenosyl-L-homocysteine + H(+). Specifically methylates the guanosine in position 1516 of 16S rRNA. The protein is Ribosomal RNA small subunit methyltransferase J of Stutzerimonas stutzeri (strain A1501) (Pseudomonas stutzeri).